Consider the following 205-residue polypeptide: Probable nicotinate-nucleotide adenylyltransferase (205 aa).

It belongs to the NadD family.

It catalyses the reaction nicotinate beta-D-ribonucleotide + ATP + H(+) = deamido-NAD(+) + diphosphate. The protein operates within cofactor biosynthesis; NAD(+) biosynthesis; deamido-NAD(+) from nicotinate D-ribonucleotide: step 1/1. Functionally, catalyzes the reversible adenylation of nicotinate mononucleotide (NaMN) to nicotinic acid adenine dinucleotide (NaAD). This Nocardioides sp. (strain ATCC BAA-499 / JS614) protein is Probable nicotinate-nucleotide adenylyltransferase.